Here is a 792-residue protein sequence, read N- to C-terminus: Molybdenum cofactor sulfurase (792 aa).

An N6-(pyridoxal phosphate)lysine modification is found at K246. The active site involves C414. The MOSC domain maps to 646–792 (LRLLRQSSQR…LTCGDVVVVT (147 aa)). Phosphoserine is present on S748.

This sequence belongs to the class-V pyridoxal-phosphate-dependent aminotransferase family. MOCOS subfamily. Requires pyridoxal 5'-phosphate as cofactor.

It carries out the reaction Mo-molybdopterin + L-cysteine + AH2 = thio-Mo-molybdopterin + L-alanine + A + H2O. It participates in cofactor biosynthesis; molybdopterin biosynthesis. Functionally, sulfurates the molybdenum cofactor. Sulfation of molybdenum is essential for xanthine dehydrogenase (XDH) and aldehyde oxidase (ADO) enzymes in which molybdenum cofactor is liganded by 1 oxygen and 1 sulfur atom in active form. The protein is Molybdenum cofactor sulfurase of Drosophila pseudoobscura pseudoobscura (Fruit fly).